The sequence spans 404 residues: Argininosuccinate synthase (404 aa).

ATP is bound at residue 9–17 (AYSGGLDTS). Tyr86 provides a ligand contact to L-citrulline. Gly116 is a binding site for ATP. L-aspartate contacts are provided by Thr118, Asn122, and Asp123. Residue Asn122 coordinates L-citrulline. L-citrulline is bound by residues Arg126, Ser174, Ser183, Glu259, and Tyr271.

Belongs to the argininosuccinate synthase family. Type 1 subfamily. Homotetramer.

It is found in the cytoplasm. The catalysed reaction is L-citrulline + L-aspartate + ATP = 2-(N(omega)-L-arginino)succinate + AMP + diphosphate + H(+). The protein operates within amino-acid biosynthesis; L-arginine biosynthesis; L-arginine from L-ornithine and carbamoyl phosphate: step 2/3. The polypeptide is Argininosuccinate synthase (Listeria monocytogenes serovar 1/2a (strain ATCC BAA-679 / EGD-e)).